Here is a 359-residue protein sequence, read N- to C-terminus: Protein RecA (359 aa).

Position 77–84 (77–84 (GPESSGKT)) interacts with ATP.

The protein belongs to the RecA family.

Its subcellular location is the cytoplasm. In terms of biological role, can catalyze the hydrolysis of ATP in the presence of single-stranded DNA, the ATP-dependent uptake of single-stranded DNA by duplex DNA, and the ATP-dependent hybridization of homologous single-stranded DNAs. It interacts with LexA causing its activation and leading to its autocatalytic cleavage. This chain is Protein RecA, found in Paramagnetospirillum magneticum (strain ATCC 700264 / AMB-1) (Magnetospirillum magneticum).